We begin with the raw amino-acid sequence, 150 residues long: Cytochrome c oxidase subunit 5A, mitochondrial (150 aa).

The N-terminal 41 residues, 1-41 (MLGAALRRCAVAATTRADPRGLLHSARTPGPAVAIQSVRCY), are a transit peptide targeting the mitochondrion. An SIFI-degron motif is present at residues 2–17 (LGAALRRCAVAATTRA). Lys-87 and Lys-113 each carry N6-acetyllysine. At Thr-141 the chain carries Phosphothreonine.

It belongs to the cytochrome c oxidase subunit 5A family. Component of the cytochrome c oxidase (complex IV, CIV), a multisubunit enzyme composed of 14 subunits. The complex is composed of a catalytic core of 3 subunits MT-CO1, MT-CO2 and MT-CO3, encoded in the mitochondrial DNA, and 11 supernumerary subunits COX4I1 (or COX4I2), COX5A, COX5B, COX6A1 (or COX6A2), COX6B1 (or COX6B2), COX6C, COX7A2 (or COX7A1), COX7B, COX7C, COX8A and NDUFA4, which are encoded in the nuclear genome. The complex exists as a monomer or a dimer and forms supercomplexes (SCs) in the inner mitochondrial membrane with NADH-ubiquinone oxidoreductase (complex I, CI) and ubiquinol-cytochrome c oxidoreductase (cytochrome b-c1 complex, complex III, CIII), resulting in different assemblies (supercomplex SCI(1)III(2)IV(1) and megacomplex MCI(2)III(2)IV(2)). Interacts with AFG1L. Interacts with RAB5IF. In response to mitochondrial stress, the precursor protein is ubiquitinated by the SIFI complex in the cytoplasm before mitochondrial import, leading to its degradation. Within the SIFI complex, UBR4 initiates ubiquitin chain that are further elongated or branched by KCMF1.

The protein resides in the mitochondrion inner membrane. Its pathway is energy metabolism; oxidative phosphorylation. In terms of biological role, component of the cytochrome c oxidase, the last enzyme in the mitochondrial electron transport chain which drives oxidative phosphorylation. The respiratory chain contains 3 multisubunit complexes succinate dehydrogenase (complex II, CII), ubiquinol-cytochrome c oxidoreductase (cytochrome b-c1 complex, complex III, CIII) and cytochrome c oxidase (complex IV, CIV), that cooperate to transfer electrons derived from NADH and succinate to molecular oxygen, creating an electrochemical gradient over the inner membrane that drives transmembrane transport and the ATP synthase. Cytochrome c oxidase is the component of the respiratory chain that catalyzes the reduction of oxygen to water. Electrons originating from reduced cytochrome c in the intermembrane space (IMS) are transferred via the dinuclear copper A center (CU(A)) of subunit 2 and heme A of subunit 1 to the active site in subunit 1, a binuclear center (BNC) formed by heme A3 and copper B (CU(B)). The BNC reduces molecular oxygen to 2 water molecules using 4 electrons from cytochrome c in the IMS and 4 protons from the mitochondrial matrix. This is Cytochrome c oxidase subunit 5A, mitochondrial (COX5A) from Homo sapiens (Human).